Here is a 194-residue protein sequence, read N- to C-terminus: Probable proteasome subunit beta type-4 (194 aa).

Belongs to the peptidase T1B family. As to quaternary structure, the 26S proteasome consists of a 20S proteasome core and two 19S regulatory subunits. The 20S proteasome core is composed of 28 subunits that are arranged in four stacked rings, resulting in a barrel-shaped structure. The two end rings are each formed by seven alpha subunits, and the two central rings are each formed by seven beta subunits. The catalytic chamber with the active sites is on the inside of the barrel.

It is found in the cytoplasm. It localises to the nucleus. Non-catalytic component of the proteasome, a multicatalytic proteinase complex which is characterized by its ability to cleave peptides with Arg, Phe, Tyr, Leu, and Glu adjacent to the leaving group at neutral or slightly basic pH. The proteasome has an ATP-dependent proteolytic activity. This Meyerozyma guilliermondii (strain ATCC 6260 / CBS 566 / DSM 6381 / JCM 1539 / NBRC 10279 / NRRL Y-324) (Yeast) protein is Probable proteasome subunit beta type-4 (PRO2).